The sequence spans 149 residues: Large ribosomal subunit protein bL9 (149 aa).

It belongs to the bacterial ribosomal protein bL9 family.

Its function is as follows. Binds to the 23S rRNA. The polypeptide is Large ribosomal subunit protein bL9 (Klebsiella pneumoniae (strain 342)).